A 298-amino-acid chain; its full sequence is Inosose dehydratase (298 aa).

This sequence belongs to the IolE/MocC family. The cofactor is glutathione. Co(2+) serves as cofactor. It depends on Mn(2+) as a cofactor.

The enzyme catalyses scyllo-inosose = 3D-3,5/4-trihydroxycyclohexane-1,2-dione + H2O. It participates in polyol metabolism; myo-inositol degradation into acetyl-CoA; acetyl-CoA from myo-inositol: step 2/7. Functionally, catalyzes the dehydration of inosose (2-keto-myo-inositol, 2KMI or 2,4,6/3,5-pentahydroxycyclohexanone) to 3D-(3,5/4)-trihydroxycyclohexane-1,2-dione (D-2,3-diketo-4-deoxy-epi-inositol). The polypeptide is Inosose dehydratase (Bacillus thuringiensis (strain Al Hakam)).